The sequence spans 263 residues: MSTSIKAIKESLEAVTSLSDPLFQELATDARLGVQKALKSRQKAIQADLAEEERLEAMLSYEKALYKEGYQAIAGIDEVGRGPLAGPVVAACVILPQHCKIKGLNDSKKIPKSKHETIYQAVKEKALAIGIGIIDNQLIDEVNIYEATKLAMLEAIKQLEGQLTQPDYLLIDAMTLDIAISQQSILKGDANSLSIAAASIVAKVTRDQMMANYDRIFPGYGFAKNAGYGTKEHLQGLKAYGITPIHRKSFEPVKSMCCDSTNP.

Positions 71-262 (QAIAGIDEVG…VKSMCCDSTN (192 aa)) constitute an RNase H type-2 domain. A divalent metal cation is bound by residues aspartate 77, glutamate 78, and aspartate 172.

The protein belongs to the RNase HII family. The cofactor is Mn(2+). Mg(2+) is required as a cofactor.

Its subcellular location is the cytoplasm. It catalyses the reaction Endonucleolytic cleavage to 5'-phosphomonoester.. Its function is as follows. Endonuclease that specifically degrades the RNA of RNA-DNA hybrids. In Streptococcus pyogenes serotype M5 (strain Manfredo), this protein is Ribonuclease HII.